A 127-amino-acid polypeptide reads, in one-letter code: Large ribosomal subunit protein bL20 (127 aa).

It belongs to the bacterial ribosomal protein bL20 family.

In terms of biological role, binds directly to 23S ribosomal RNA and is necessary for the in vitro assembly process of the 50S ribosomal subunit. It is not involved in the protein synthesizing functions of that subunit. This Corynebacterium diphtheriae (strain ATCC 700971 / NCTC 13129 / Biotype gravis) protein is Large ribosomal subunit protein bL20.